We begin with the raw amino-acid sequence, 156 residues long: Small ribosomal subunit protein uS7 (156 aa).

It belongs to the universal ribosomal protein uS7 family. In terms of assembly, part of the 30S ribosomal subunit. Contacts proteins S9 and S11.

Its function is as follows. One of the primary rRNA binding proteins, it binds directly to 16S rRNA where it nucleates assembly of the head domain of the 30S subunit. Is located at the subunit interface close to the decoding center, probably blocks exit of the E-site tRNA. This chain is Small ribosomal subunit protein uS7, found in Actinobacillus succinogenes (strain ATCC 55618 / DSM 22257 / CCUG 43843 / 130Z).